Here is a 384-residue protein sequence, read N- to C-terminus: 2-deoxy-scyllo-inosose synthase (384 aa).

NAD(+)-binding positions include Asp42, 73-76 (EVHK), 105-109 (GITGN), 129-130 (TT), 140-142 (SLK), and 151-152 (KN). Lys142 is a catalytic residue. Glu184 provides a ligand contact to Co(2+). Glu244 is a catalytic residue. The Co(2+) site is built by His247 and His263.

This sequence belongs to the sugar phosphate cyclases superfamily. DOI synthase family. Requires NAD(+) as cofactor. The cofactor is Co(2+).

It carries out the reaction D-glucose 6-phosphate = 2-deoxy-L-scyllo-inosose + phosphate. Its pathway is metabolic intermediate biosynthesis; 2-deoxystreptamine biosynthesis; 2-deoxystreptamine from D-glucose 6-phosphate: step 1/4. The protein operates within antibiotic biosynthesis; lividomycin biosynthesis. In terms of biological role, catalyzes the intramolecular carbocycle formation from D-glucose-6-phosphate to 2-deoxy-scyllo-inosose (DOI). The sequence is that of 2-deoxy-scyllo-inosose synthase (livC) from Streptomyces lividus.